Reading from the N-terminus, the 435-residue chain is Trigger factor (435 aa).

The PPIase FKBP-type domain occupies 163 to 248 (GDFVTFDFKG…VKEIKVKELP (86 aa)).

The protein belongs to the FKBP-type PPIase family. Tig subfamily.

It localises to the cytoplasm. The catalysed reaction is [protein]-peptidylproline (omega=180) = [protein]-peptidylproline (omega=0). Its function is as follows. Involved in protein export. Acts as a chaperone by maintaining the newly synthesized protein in an open conformation. Functions as a peptidyl-prolyl cis-trans isomerase. This Geobacter sp. (strain M21) protein is Trigger factor.